Here is a 777-residue protein sequence, read N- to C-terminus: Biotin sulfoxide reductase (777 aa).

A Mo-bis(molybdopterin guanine dinucleotide)-binding site is contributed by serine 148.

This sequence belongs to the prokaryotic molybdopterin-containing oxidoreductase family. The cofactor is Mo-bis(molybdopterin guanine dinucleotide).

It catalyses the reaction [thioredoxin]-disulfide + L-methionine + H2O = L-methionine (S)-S-oxide + [thioredoxin]-dithiol. Its function is as follows. This enzyme may serve as a scavenger, allowing the cell to utilize biotin sulfoxide as a biotin source. It reduces a spontaneous oxidation product of biotin, D-biotin D-sulfoxide (BSO or BDS), back to biotin. Also exhibits methionine-(S)-sulfoxide (Met-S-SO) reductase activity, acting specifically on the (S) enantiomer in the free, but not the protein-bound form. It thus plays a role in assimilation of oxidized methionines. The polypeptide is Biotin sulfoxide reductase (bisC) (Escherichia coli (strain K12)).